A 141-amino-acid chain; its full sequence is Nucleoside diphosphate kinase (141 aa).

ATP is bound by residues K9, F57, R85, T91, R102, and N112. H115 functions as the Pros-phosphohistidine intermediate in the catalytic mechanism.

It belongs to the NDK family. In terms of assembly, homotetramer. Mg(2+) is required as a cofactor.

Its subcellular location is the cytoplasm. It carries out the reaction a 2'-deoxyribonucleoside 5'-diphosphate + ATP = a 2'-deoxyribonucleoside 5'-triphosphate + ADP. The enzyme catalyses a ribonucleoside 5'-diphosphate + ATP = a ribonucleoside 5'-triphosphate + ADP. Major role in the synthesis of nucleoside triphosphates other than ATP. The ATP gamma phosphate is transferred to the NDP beta phosphate via a ping-pong mechanism, using a phosphorylated active-site intermediate. The sequence is that of Nucleoside diphosphate kinase from Prosthecochloris aestuarii (strain DSM 271 / SK 413).